The primary structure comprises 118 residues: DNA-binding protein inhibitor ID-3-B (118 aa).

A bHLH domain is found at 32-84 (SLKGAGIDETMGLLYDMNGCYSKLKELVPGIPQGSKLSQVEILQHVIDYIFDL).

Homodimer. Heterodimer with other HLH proteins. Interacts (via HLH domain) with the bHLH protein hes4/hairy2 (via Orange domain). Interacts with stat3.

The protein resides in the nucleus. Transcriptional regulator (lacking a basic DNA binding domain) which negatively regulates the basic helix-loop-helix (bHLH) transcription factors by forming heterodimers and inhibiting their DNA binding and transcriptional activity. Influences cell fate decisions in the embryo by sequestering and blocking the activity of the bHLH transcription factors that control these decisions. Inhibits the binding of myogenic bHLH-containing complexes to E-box DNA, thereby preventing activation of muscle-specific target genes. Also inhibits the activity of neurogenic factor neurod1/neuroD. Plays a role in cell cycle progression and survival of neural crest progenitors; binding to either hes4-B/hairy2b or stat3 blocks the formation of transcription factor complexes and the repressor function of hes4-B/hairy2B, to allow neural crest progenitors to differentiate. May play a role in the regulation of the circadian rhythm. The sequence is that of DNA-binding protein inhibitor ID-3-B (id3-b) from Xenopus laevis (African clawed frog).